A 338-amino-acid polypeptide reads, in one-letter code: Cytoskeleton protein RodZ (338 aa).

At 1–111 (MNTEATHEEN…LGKSRKKRDG (111 aa)) the chain is on the cytoplasmic side. The HTH cro/C1-type domain occupies 19 to 71 (LRLAREQLGLSQQVVAERLCLKVSTVRDIEEDKAPADLASTFLRGYIRSYARL). Positions 30 to 49 (QQVVAERLCLKVSTVRDIEE) form a DNA-binding region, H-T-H motif. The chain crosses the membrane as a helical; Signal-anchor for type II membrane protein span at residues 112 to 132 (WLMSFTWLVLFVVVGLTGAWW). The Periplasmic segment spans residues 133–338 (WQNHKAQQEE…TLNAEQSVTQ (206 aa)). Composition is skewed to polar residues over residues 147 to 180 (ADQS…QDQA) and 189 to 214 (GDTQ…SQQP). The tract at residues 147-245 (ADQSSAELSQ…AQSQLPVGQA (99 aa)) is disordered. The span at 220–239 (SQANTDTAAQQNTTQPAQSQ) shows a compositional bias: low complexity.

The protein belongs to the RodZ family.

The protein localises to the cell inner membrane. Functionally, cytoskeletal protein that is involved in cell-shape control through regulation of the length of the long axis. The polypeptide is Cytoskeleton protein RodZ (Cronobacter sakazakii (strain ATCC BAA-894) (Enterobacter sakazakii)).